A 345-amino-acid polypeptide reads, in one-letter code: S-adenosylmethionine:tRNA ribosyltransferase-isomerase (345 aa).

It belongs to the QueA family. Monomer.

It localises to the cytoplasm. It catalyses the reaction 7-aminomethyl-7-carbaguanosine(34) in tRNA + S-adenosyl-L-methionine = epoxyqueuosine(34) in tRNA + adenine + L-methionine + 2 H(+). It participates in tRNA modification; tRNA-queuosine biosynthesis. In terms of biological role, transfers and isomerizes the ribose moiety from AdoMet to the 7-aminomethyl group of 7-deazaguanine (preQ1-tRNA) to give epoxyqueuosine (oQ-tRNA). The protein is S-adenosylmethionine:tRNA ribosyltransferase-isomerase of Thermus thermophilus (strain ATCC BAA-163 / DSM 7039 / HB27).